We begin with the raw amino-acid sequence, 103 residues long: Large ribosomal subunit protein eL30 (103 aa).

It belongs to the eukaryotic ribosomal protein eL30 family.

This is Large ribosomal subunit protein eL30 from Methanothrix thermoacetophila (strain DSM 6194 / JCM 14653 / NBRC 101360 / PT) (Methanosaeta thermophila).